The primary structure comprises 89 residues: Small ribosomal subunit protein uS15 (89 aa).

Belongs to the universal ribosomal protein uS15 family. As to quaternary structure, part of the 30S ribosomal subunit. Forms a bridge to the 50S subunit in the 70S ribosome, contacting the 23S rRNA.

One of the primary rRNA binding proteins, it binds directly to 16S rRNA where it helps nucleate assembly of the platform of the 30S subunit by binding and bridging several RNA helices of the 16S rRNA. Functionally, forms an intersubunit bridge (bridge B4) with the 23S rRNA of the 50S subunit in the ribosome. This is Small ribosomal subunit protein uS15 from Frankia alni (strain DSM 45986 / CECT 9034 / ACN14a).